Reading from the N-terminus, the 572-residue chain is Methionine--tRNA ligase (572 aa).

Residues 11 to 21 carry the 'HIGH' region motif; the sequence is PYINGIKHLGN. The Zn(2+) site is built by Cys-143, Cys-146, Cys-156, and Cys-159. The short motif at 346-350 is the 'KMSKS' region element; that stretch reads QFSTS. Thr-349 lines the ATP pocket.

The protein belongs to the class-I aminoacyl-tRNA synthetase family. MetG type 1 subfamily. As to quaternary structure, monomer. It depends on Zn(2+) as a cofactor.

Its subcellular location is the cytoplasm. It catalyses the reaction tRNA(Met) + L-methionine + ATP = L-methionyl-tRNA(Met) + AMP + diphosphate. Its function is as follows. Is required not only for elongation of protein synthesis but also for the initiation of all mRNA translation through initiator tRNA(fMet) aminoacylation. This chain is Methionine--tRNA ligase, found in Cereibacter sphaeroides (strain ATCC 17025 / ATH 2.4.3) (Rhodobacter sphaeroides).